The primary structure comprises 82 residues: UPF0291 protein LVIS_1359 (82 aa).

It belongs to the UPF0291 family.

The protein localises to the cytoplasm. The chain is UPF0291 protein LVIS_1359 from Levilactobacillus brevis (strain ATCC 367 / BCRC 12310 / CIP 105137 / JCM 1170 / LMG 11437 / NCIMB 947 / NCTC 947) (Lactobacillus brevis).